Reading from the N-terminus, the 185-residue chain is Ribosome-recycling factor (185 aa).

It belongs to the RRF family.

The protein resides in the cytoplasm. In terms of biological role, responsible for the release of ribosomes from messenger RNA at the termination of protein biosynthesis. May increase the efficiency of translation by recycling ribosomes from one round of translation to another. This Lactococcus lactis subsp. cremoris (strain SK11) protein is Ribosome-recycling factor.